The following is a 374-amino-acid chain: Peptidoglycan recognition protein 4 (374 aa).

Residues 1–20 (MLSWLLVFSILVLLAQGVSS) form the signal peptide. N-linked (GlcNAc...) asparagine glycosylation is found at Asn-39, Asn-93, and Asn-146. N-acetylmuramoyl-L-alanine amidase domains follow at residues 76–212 (RPVD…KACP) and 233–359 (PAKY…LSPG). Disulfide bonds link Cys-211-Cys-333, Cys-227-Cys-271, and Cys-247-Cys-253. Residue Tyr-275 coordinates peptidoglycan. Interaction with murein stretches follow at residues 294-303 (QGSKTDSYND) and 354-355 (NT).

This sequence belongs to the N-acetylmuramoyl-L-alanine amidase 2 family. Homodimer; disulfide-linked. Heterodimer with PGLYRP3; disulfide-linked. In terms of tissue distribution, ubiquitous.

The protein localises to the secreted. Its function is as follows. Pattern receptor that binds to murein peptidoglycans (PGN) of Gram-positive bacteria. Has bactericidal activity towards Gram-positive bacteria. May kill Gram-positive bacteria by interfering with peptidoglycan biosynthesis. Also binds to Gram-negative bacteria, and has bacteriostatic activity towards Gram-negative bacteria. Plays a role in innate immunity. In Mus musculus (Mouse), this protein is Peptidoglycan recognition protein 4 (Pglyrp4).